The sequence spans 235 residues: Ribitol-5-phosphate cytidylyltransferase (235 aa).

CTP is bound by residues 7-10 (LAGG), 82-88 (GADRNTS), and serine 113.

This sequence belongs to the IspD/TarI cytidylyltransferase family. TarI subfamily.

The catalysed reaction is D-ribitol 5-phosphate + CTP + H(+) = CDP-L-ribitol + diphosphate. The protein operates within cell wall biogenesis; poly(ribitol phosphate) teichoic acid biosynthesis. Catalyzes the transfer of the cytidylyl group of CTP to D-ribitol 5-phosphate. The polypeptide is Ribitol-5-phosphate cytidylyltransferase (Streptococcus pneumoniae serotype 19F (strain G54)).